The chain runs to 209 residues: COP9 signalosome complex subunit 8 (209 aa).

The PCI domain maps to 8 to 179 (ESAFSFKKLL…GALDVSFNKF (172 aa)). S175 is subject to Phosphoserine.

Belongs to the CSN8 family. In terms of assembly, component of the CSN complex, composed of COPS1/GPS1, COPS2, COPS3, COPS4, COPS5, COPS6, COPS7 (COPS7A or COPS7B), COPS8 and COPS9 isoform 1. In the complex, it probably interacts directly with COPS3, COPS4 and COPS7 (COPS7A or COPS7B).

It localises to the cytoplasm. The protein resides in the nucleus. Functionally, component of the COP9 signalosome complex (CSN), a complex involved in various cellular and developmental processes. The CSN complex is an essential regulator of the ubiquitin (Ubl) conjugation pathway by mediating the deneddylation of the cullin subunits of SCF-type E3 ligase complexes, leading to decrease the Ubl ligase activity of SCF-type complexes such as SCF, CSA or DDB2. The complex is also involved in phosphorylation of p53/TP53, c-jun/JUN, IkappaBalpha/NFKBIA, ITPK1 and IRF8/ICSBP, possibly via its association with CK2 and PKD kinases. CSN-dependent phosphorylation of TP53 and JUN promotes and protects degradation by the Ubl system, respectively. The chain is COP9 signalosome complex subunit 8 (COPS8) from Homo sapiens (Human).